The following is a 284-amino-acid chain: Bifunctional protein FolD (284 aa).

NADP(+)-binding positions include 165–167 (GRG), Thr192, and Val233.

The protein belongs to the tetrahydrofolate dehydrogenase/cyclohydrolase family. In terms of assembly, homodimer.

It catalyses the reaction (6R)-5,10-methylene-5,6,7,8-tetrahydrofolate + NADP(+) = (6R)-5,10-methenyltetrahydrofolate + NADPH. It carries out the reaction (6R)-5,10-methenyltetrahydrofolate + H2O = (6R)-10-formyltetrahydrofolate + H(+). Its pathway is one-carbon metabolism; tetrahydrofolate interconversion. Functionally, catalyzes the oxidation of 5,10-methylenetetrahydrofolate to 5,10-methenyltetrahydrofolate and then the hydrolysis of 5,10-methenyltetrahydrofolate to 10-formyltetrahydrofolate. The sequence is that of Bifunctional protein FolD from Corynebacterium glutamicum (strain R).